The primary structure comprises 604 residues: Choline transporter-like protein 3 (604 aa).

Asparagine 90 and asparagine 103 each carry an N-linked (GlcNAc...) asparagine glycan. Transmembrane regions (helical) follow at residues 165-185 (DTIL…LFTF), 195-215 (IIIS…WWLY), 237-257 (LAFA…IFTL), 286-306 (LWTF…LLSL), and 330-350 (YLWW…LTCQ). Asparagine 454 and asparagine 472 each carry an N-linked (GlcNAc...) asparagine glycan. 2 consecutive transmembrane segments (helical) span residues 485–505 (FIIF…GLMA) and 514–534 (VWAI…HSFL). Positions 581–592 (NARSQGHKNSLP) are enriched in polar residues. The segment at 581–604 (NARSQGHKNSLPNEEGTELRPIVR) is disordered.

Belongs to the CTL (choline transporter-like) family. Expressed in colon, kidney and ileum.

Its subcellular location is the membrane. The chain is Choline transporter-like protein 3 (Slc44a3) from Rattus norvegicus (Rat).